Reading from the N-terminus, the 419-residue chain is Caspase-12 (419 aa).

Positions 1–92 constitute a CARD domain; that stretch reads MAARRTHERD…QLSLQFSNDE (92 aa). Serine 85 is subject to Phosphoserine. Residues 88 to 113 are disordered; sequence FSNDEDDGPQKICTPSSPSESKRKVE. Residues histidine 250 and cysteine 298 contribute to the active site.

This sequence belongs to the peptidase C14A family. As to quaternary structure, heterotetramer that consists of two anti-parallel arranged heterodimers, each one formed by two subunits (Potential). Interacts with TRAF2 under resting conditions; this interaction is reduced in ER stress conditions. In terms of tissue distribution, mainly expressed in skeletal muscle and lung.

In terms of biological role, involved in the activation cascade of caspases responsible for apoptosis execution. This chain is Caspase-12 (Casp12), found in Mus musculus (Mouse).